Reading from the N-terminus, the 365-residue chain is Anhydro-N-acetylmuramic acid kinase (365 aa).

Position 12–19 (12–19 (GTSLDGID)) interacts with ATP.

This sequence belongs to the anhydro-N-acetylmuramic acid kinase family.

The catalysed reaction is 1,6-anhydro-N-acetyl-beta-muramate + ATP + H2O = N-acetyl-D-muramate 6-phosphate + ADP + H(+). Its pathway is amino-sugar metabolism; 1,6-anhydro-N-acetylmuramate degradation. It functions in the pathway cell wall biogenesis; peptidoglycan recycling. Its function is as follows. Catalyzes the specific phosphorylation of 1,6-anhydro-N-acetylmuramic acid (anhMurNAc) with the simultaneous cleavage of the 1,6-anhydro ring, generating MurNAc-6-P. Is required for the utilization of anhMurNAc either imported from the medium or derived from its own cell wall murein, and thus plays a role in cell wall recycling. The chain is Anhydro-N-acetylmuramic acid kinase from Rhizorhabdus wittichii (strain DSM 6014 / CCUG 31198 / JCM 15750 / NBRC 105917 / EY 4224 / RW1) (Sphingomonas wittichii).